We begin with the raw amino-acid sequence, 831 residues long: Translation initiation factor IF-2 (831 aa).

Positions Thr-329–Lys-499 constitute a tr-type G domain. The segment at Gly-338 to Thr-345 is G1. Position 338 to 345 (Gly-338 to Thr-345) interacts with GTP. The G2 stretch occupies residues Gly-363–His-367. The tract at residues Asp-385–Gly-388 is G3. Residues Asp-385 to His-389 and Asn-439 to Asp-442 each bind GTP. The G4 stretch occupies residues Asn-439 to Asp-442. Residues Ser-475 to Leu-477 form a G5 region.

Belongs to the TRAFAC class translation factor GTPase superfamily. Classic translation factor GTPase family. IF-2 subfamily.

Its subcellular location is the cytoplasm. In terms of biological role, one of the essential components for the initiation of protein synthesis. Protects formylmethionyl-tRNA from spontaneous hydrolysis and promotes its binding to the 30S ribosomal subunits. Also involved in the hydrolysis of GTP during the formation of the 70S ribosomal complex. This is Translation initiation factor IF-2 from Rickettsia massiliae (strain Mtu5).